A 362-amino-acid polypeptide reads, in one-letter code: DNA polymerase IV (362 aa).

Residues 6 to 187 (IIHVDMDAFY…LPVSSFHGVG (182 aa)) form the UmuC domain. The Mg(2+) site is built by D10 and D105. Residue E106 is part of the active site.

Belongs to the DNA polymerase type-Y family. As to quaternary structure, monomer. It depends on Mg(2+) as a cofactor.

Its subcellular location is the cytoplasm. It carries out the reaction DNA(n) + a 2'-deoxyribonucleoside 5'-triphosphate = DNA(n+1) + diphosphate. In terms of biological role, poorly processive, error-prone DNA polymerase involved in untargeted mutagenesis. Copies undamaged DNA at stalled replication forks, which arise in vivo from mismatched or misaligned primer ends. These misaligned primers can be extended by PolIV. Exhibits no 3'-5' exonuclease (proofreading) activity. May be involved in translesional synthesis, in conjunction with the beta clamp from PolIII. The protein is DNA polymerase IV of Leptospira interrogans serogroup Icterohaemorrhagiae serovar copenhageni (strain Fiocruz L1-130).